A 589-amino-acid chain; its full sequence is Peroxisomal biogenesis factor 8 (589 aa).

Positions 587–589 match the Microbody targeting signal motif; the sequence is SKL.

It is found in the peroxisome matrix. Its function is as follows. Required for peroxisome assembly. The chain is Peroxisomal biogenesis factor 8 (PEX8) from Saccharomyces cerevisiae (strain ATCC 204508 / S288c) (Baker's yeast).